A 310-amino-acid polypeptide reads, in one-letter code: Ribosomal RNA small subunit methyltransferase H (310 aa).

Residues 47–49 (GGH), aspartate 66, phenylalanine 93, aspartate 108, and glutamine 115 each bind S-adenosyl-L-methionine. A disordered region spans residues 275–310 (RKPFMASEQEQADNPRSRSAKLRIARRRPDTARSGP). The segment covering 301–310 (RRPDTARSGP) has biased composition (basic and acidic residues).

Belongs to the methyltransferase superfamily. RsmH family.

The protein resides in the cytoplasm. It catalyses the reaction cytidine(1402) in 16S rRNA + S-adenosyl-L-methionine = N(4)-methylcytidine(1402) in 16S rRNA + S-adenosyl-L-homocysteine + H(+). Specifically methylates the N4 position of cytidine in position 1402 (C1402) of 16S rRNA. The chain is Ribosomal RNA small subunit methyltransferase H from Synechococcus sp. (strain CC9311).